Here is a 255-residue protein sequence, read N- to C-terminus: Small ribosomal subunit protein eS1 (255 aa).

Basic residues predominate over residues 1 to 18 (MAVGKNKRLSKGKKGLKK). Residues 1-28 (MAVGKNKRLSKGKKGLKKRTQDPFSRKD) are disordered. A2 is subject to N-acetylalanine; partial. Residues 19–28 (RTQDPFSRKD) show a composition bias toward basic and acidic residues.

Belongs to the eukaryotic ribosomal protein eS1 family. Component of the small ribosomal subunit. Mature ribosomes consist of a small (40S) and a large (60S) subunit. The 40S subunit contains about 33 different proteins and 1 molecule of RNA (18S). The 60S subunit contains about 49 different proteins and 3 molecules of RNA (25S, 5.8S and 5S).

The protein resides in the cytoplasm. This chain is Small ribosomal subunit protein eS1, found in Ajellomyces capsulatus (strain G186AR / H82 / ATCC MYA-2454 / RMSCC 2432) (Darling's disease fungus).